The primary structure comprises 124 residues: Small ribosomal subunit protein uS12 (124 aa).

The tract at residues 1–24 (MPTINQLVRQGRKKSVKKTNTPAL) is disordered. Asp89 carries the 3-methylthioaspartic acid modification.

Belongs to the universal ribosomal protein uS12 family. In terms of assembly, part of the 30S ribosomal subunit. Contacts proteins S8 and S17. May interact with IF1 in the 30S initiation complex.

Its function is as follows. With S4 and S5 plays an important role in translational accuracy. In terms of biological role, interacts with and stabilizes bases of the 16S rRNA that are involved in tRNA selection in the A site and with the mRNA backbone. Located at the interface of the 30S and 50S subunits, it traverses the body of the 30S subunit contacting proteins on the other side and probably holding the rRNA structure together. The combined cluster of proteins S8, S12 and S17 appears to hold together the shoulder and platform of the 30S subunit. This chain is Small ribosomal subunit protein uS12, found in Desulfotalea psychrophila (strain LSv54 / DSM 12343).